The following is a 95-amino-acid chain: Oxytetracycline polyketide synthase acyl carrier protein (95 aa).

Positions Leu-3–Leu-81 constitute a Carrier domain. Ser-41 is modified (O-(pantetheine 4'-phosphoryl)serine).

Post-translationally, 4'-phosphopantetheine is transferred from CoA to a specific serine of the apo-ACP-like protein.

Its pathway is antibiotic biosynthesis; oxytetracycline biosynthesis. Acyl carrier protein. This Streptomyces rimosus protein is Oxytetracycline polyketide synthase acyl carrier protein.